Here is a 295-residue protein sequence, read N- to C-terminus: (R)-phenoxypropionate/alpha-ketoglutarate-dioxygenase (295 aa).

2 residues coordinate Fe cation: H111 and D113. 2-oxoglutarate-binding residues include T138 and W255. H270 is a Fe cation binding site. R281 contributes to the 2-oxoglutarate binding site.

It belongs to the TfdA dioxygenase family. Homotrimer. Fe cation is required as a cofactor. Requires L-ascorbate as cofactor.

The enzyme catalyses (R)-2-(4-chloro-2-methylphenoxy)propanoate + 2-oxoglutarate + O2 = 2-methyl-4-chlorophenol + pyruvate + succinate + CO2. It catalyses the reaction (R)-(2,4-dichlorophenoxy)propanoate + 2-oxoglutarate + O2 = 2,4-dichlorophenol + pyruvate + succinate + CO2. The protein operates within xenobiotic degradation; 2-(2,4-dichlorophenoxy)propanoate degradation. With respect to regulation, inhibited by divalent cations, most significantly by copper and nickel, and by diethylpyrocarbonate (DEPC). Involved in the degradation of the phenoxypropionate herbicides. Catalyzes the enantiospecific cleavage of the ether bond in the herbicid R-dichlorprop ((R)-2-(2,4-dichlorophenoxy)propionate)(R-2,4-DP) and R-mecoprop ((R)-2-(4-chloro-2-methylphenoxy)propionate)(R-2,4-MCPP). It can also accept (RS)-2-(2,4,5-trichlorophenoxy)propionate, (RS)-2-(4-chlorophenoxy)propionate, (RS)-2-(m-chlorophenoxy)propionate, however it can only accept 2-oxoglutarate as oxygen acceptor. The sequence is that of (R)-phenoxypropionate/alpha-ketoglutarate-dioxygenase from Delftia acidovorans (Pseudomonas acidovorans).